A 433-amino-acid polypeptide reads, in one-letter code: 3-phosphoshikimate 1-carboxyvinyltransferase (433 aa).

Lys-23, Ser-24, and Arg-28 together coordinate 3-phosphoshikimate. Lys-23 lines the phosphoenolpyruvate pocket. Residues Gly-95 and Arg-123 each contribute to the phosphoenolpyruvate site. 6 residues coordinate 3-phosphoshikimate: Ser-170, Ser-171, Gln-172, Ser-198, Asp-317, and Lys-344. Gln-172 contributes to the phosphoenolpyruvate binding site. Catalysis depends on Asp-317, which acts as the Proton acceptor. Positions 348, 391, and 416 each coordinate phosphoenolpyruvate.

The protein belongs to the EPSP synthase family. As to quaternary structure, monomer.

Its subcellular location is the cytoplasm. The enzyme catalyses 3-phosphoshikimate + phosphoenolpyruvate = 5-O-(1-carboxyvinyl)-3-phosphoshikimate + phosphate. Its pathway is metabolic intermediate biosynthesis; chorismate biosynthesis; chorismate from D-erythrose 4-phosphate and phosphoenolpyruvate: step 6/7. Its function is as follows. Catalyzes the transfer of the enolpyruvyl moiety of phosphoenolpyruvate (PEP) to the 5-hydroxyl of shikimate-3-phosphate (S3P) to produce enolpyruvyl shikimate-3-phosphate and inorganic phosphate. The protein is 3-phosphoshikimate 1-carboxyvinyltransferase of Neisseria gonorrhoeae (strain NCCP11945).